A 459-amino-acid polypeptide reads, in one-letter code: Bifunctional protein GlmU (459 aa).

Positions 1–229 (MSNFAIILAA…FDESLGVNDR (229 aa)) are pyrophosphorylase. Residues 8-11 (LAAG), Lys22, Gln72, and 77-78 (GT) contribute to the UDP-N-acetyl-alpha-D-glucosamine site. Residue Asp102 coordinates Mg(2+). Gly139, Glu154, Asn169, and Asn227 together coordinate UDP-N-acetyl-alpha-D-glucosamine. Position 227 (Asn227) interacts with Mg(2+). The interval 230–250 (VALATAESVMRRRINHKHMVN) is linker. An N-acetyltransferase region spans residues 251-459 (GVSFVNPEAT…TRLPHHPKNQ (209 aa)). Residues Arg332 and Lys350 each contribute to the UDP-N-acetyl-alpha-D-glucosamine site. Residue His362 is the Proton acceptor of the active site. UDP-N-acetyl-alpha-D-glucosamine is bound by residues Tyr365 and Asn376. Acetyl-CoA contacts are provided by residues Ala379, 385–386 (NY), Ser404, Ala422, and Arg439.

This sequence in the N-terminal section; belongs to the N-acetylglucosamine-1-phosphate uridyltransferase family. It in the C-terminal section; belongs to the transferase hexapeptide repeat family. Homotrimer. It depends on Mg(2+) as a cofactor.

It localises to the cytoplasm. It carries out the reaction alpha-D-glucosamine 1-phosphate + acetyl-CoA = N-acetyl-alpha-D-glucosamine 1-phosphate + CoA + H(+). The catalysed reaction is N-acetyl-alpha-D-glucosamine 1-phosphate + UTP + H(+) = UDP-N-acetyl-alpha-D-glucosamine + diphosphate. It participates in nucleotide-sugar biosynthesis; UDP-N-acetyl-alpha-D-glucosamine biosynthesis; N-acetyl-alpha-D-glucosamine 1-phosphate from alpha-D-glucosamine 6-phosphate (route II): step 2/2. Its pathway is nucleotide-sugar biosynthesis; UDP-N-acetyl-alpha-D-glucosamine biosynthesis; UDP-N-acetyl-alpha-D-glucosamine from N-acetyl-alpha-D-glucosamine 1-phosphate: step 1/1. The protein operates within bacterial outer membrane biogenesis; LPS lipid A biosynthesis. Functionally, catalyzes the last two sequential reactions in the de novo biosynthetic pathway for UDP-N-acetylglucosamine (UDP-GlcNAc). The C-terminal domain catalyzes the transfer of acetyl group from acetyl coenzyme A to glucosamine-1-phosphate (GlcN-1-P) to produce N-acetylglucosamine-1-phosphate (GlcNAc-1-P), which is converted into UDP-GlcNAc by the transfer of uridine 5-monophosphate (from uridine 5-triphosphate), a reaction catalyzed by the N-terminal domain. The polypeptide is Bifunctional protein GlmU (Streptococcus pneumoniae (strain JJA)).